Reading from the N-terminus, the 470-residue chain is Pyoverdine export outer membrane protein OpmQ (470 aa).

The signal sequence occupies residues 1–18 (MTLPRHLCLLPLSLSLLA). C19 carries the N-palmitoyl cysteine lipid modification. Residue C19 is the site of S-diacylglycerol cysteine attachment.

Belongs to the outer membrane factor (OMF) (TC 1.B.17) family. As to quaternary structure, part of the tripartite efflux system PvdRT-OpmQ, which is composed of an inner membrane component with both ATPase and permease domains, PvdT, a periplasmic membrane fusion protein, PvdR, and an outer membrane component, OpmQ.

It is found in the cell outer membrane. Functionally, part of the tripartite efflux system PvdRT-OpmQ required for the secretion into the extracellular milieu of the siderophore pyoverdine (PVD), which is involved in iron acquisition. The system is responsible for export of newly synthesized PVD after the final steps of biosynthesis have taken place in the periplasm. It is also responsible for recycling of PVD after internalization of ferri-PVD into the periplasm by the outer-membrane receptor FpvA and release of iron from PVD, thus making PVD available for new cycles of iron uptake. Contributes to resistance against ampicillin. This chain is Pyoverdine export outer membrane protein OpmQ, found in Pseudomonas putida (strain ATCC 47054 / DSM 6125 / CFBP 8728 / NCIMB 11950 / KT2440).